A 222-amino-acid chain; its full sequence is Thymidylate kinase (222 aa).

ATP is bound at residue 10–17; it reads GLEGAGKS.

It belongs to the thymidylate kinase family.

It carries out the reaction dTMP + ATP = dTDP + ADP. Phosphorylation of dTMP to form dTDP in both de novo and salvage pathways of dTTP synthesis. In Alteromonas mediterranea (strain DSM 17117 / CIP 110805 / LMG 28347 / Deep ecotype), this protein is Thymidylate kinase.